The following is a 376-amino-acid chain: Tetraacyldisaccharide 4'-kinase (376 aa).

51–58 (AVGGTGKT) lines the ATP pocket.

The protein belongs to the LpxK family.

It carries out the reaction a lipid A disaccharide + ATP = a lipid IVA + ADP + H(+). Its pathway is glycolipid biosynthesis; lipid IV(A) biosynthesis; lipid IV(A) from (3R)-3-hydroxytetradecanoyl-[acyl-carrier-protein] and UDP-N-acetyl-alpha-D-glucosamine: step 6/6. Functionally, transfers the gamma-phosphate of ATP to the 4'-position of a tetraacyldisaccharide 1-phosphate intermediate (termed DS-1-P) to form tetraacyldisaccharide 1,4'-bis-phosphate (lipid IVA). The sequence is that of Tetraacyldisaccharide 4'-kinase from Bacteroides fragilis (strain ATCC 25285 / DSM 2151 / CCUG 4856 / JCM 11019 / LMG 10263 / NCTC 9343 / Onslow / VPI 2553 / EN-2).